Reading from the N-terminus, the 137-residue chain is Small ribosomal subunit protein uS12 (137 aa).

Residues 1–43 (MPTINQLVRKGRVSKTKKSDSPALNKGYNSFKKRMTDQNAPQK) form a disordered region.

This sequence belongs to the universal ribosomal protein uS12 family. Part of the 30S ribosomal subunit. Contacts proteins S8 and S17. May interact with IF1 in the 30S initiation complex.

In terms of biological role, with S4 and S5 plays an important role in translational accuracy. Functionally, interacts with and stabilizes bases of the 16S rRNA that are involved in tRNA selection in the A site and with the mRNA backbone. Located at the interface of the 30S and 50S subunits, it traverses the body of the 30S subunit contacting proteins on the other side and probably holding the rRNA structure together. The combined cluster of proteins S8, S12 and S17 appears to hold together the shoulder and platform of the 30S subunit. The sequence is that of Small ribosomal subunit protein uS12 from Oceanobacillus iheyensis (strain DSM 14371 / CIP 107618 / JCM 11309 / KCTC 3954 / HTE831).